An 82-amino-acid chain; its full sequence is Small ribosomal subunit protein bS18 (82 aa).

The interval 1–20 (MVDINQIPTRRPFHRRHKTC) is disordered.

The protein belongs to the bacterial ribosomal protein bS18 family. Part of the 30S ribosomal subunit. Forms a tight heterodimer with protein bS6.

In terms of biological role, binds as a heterodimer with protein bS6 to the central domain of the 16S rRNA, where it helps stabilize the platform of the 30S subunit. In Brucella suis (strain ATCC 23445 / NCTC 10510), this protein is Small ribosomal subunit protein bS18.